The sequence spans 428 residues: Histidine--tRNA ligase (428 aa).

This sequence belongs to the class-II aminoacyl-tRNA synthetase family. Homodimer.

The protein localises to the cytoplasm. It carries out the reaction tRNA(His) + L-histidine + ATP = L-histidyl-tRNA(His) + AMP + diphosphate + H(+). The sequence is that of Histidine--tRNA ligase from Bordetella pertussis (strain Tohama I / ATCC BAA-589 / NCTC 13251).